A 102-amino-acid polypeptide reads, in one-letter code: Small ribosomal subunit protein bS6 (102 aa).

It belongs to the bacterial ribosomal protein bS6 family.

Its function is as follows. Binds together with bS18 to 16S ribosomal RNA. The polypeptide is Small ribosomal subunit protein bS6 (Deinococcus geothermalis (strain DSM 11300 / CIP 105573 / AG-3a)).